Reading from the N-terminus, the 332-residue chain is Cyclin-dependent kinase 1 (332 aa).

The 291-residue stretch at 22–312 folds into the Protein kinase domain; sequence FTKLEKIGEG…AKKALVHPYF (291 aa). ATP contacts are provided by residues 28–36 and K51; that span reads IGEGTYGVV. T32 is modified (phosphothreonine). Position 33 is a phosphotyrosine (Y33). D146 serves as the catalytic Proton acceptor.

This sequence belongs to the protein kinase superfamily. CMGC Ser/Thr protein kinase family. CDC2/CDKX subfamily. As to quaternary structure, forms a stable but non-covalent complex with a regulatory subunit and with a cyclin. Interacts with cks-1. Post-translationally, phosphorylated.

The protein resides in the nucleus. Its subcellular location is the cytoplasm. It localises to the cytoskeleton. The protein localises to the microtubule organizing center. It is found in the centrosome. The protein resides in the chromosome. The catalysed reaction is L-seryl-[protein] + ATP = O-phospho-L-seryl-[protein] + ADP + H(+). It catalyses the reaction L-threonyl-[protein] + ATP = O-phospho-L-threonyl-[protein] + ADP + H(+). It carries out the reaction [DNA-directed RNA polymerase] + ATP = phospho-[DNA-directed RNA polymerase] + ADP + H(+). With respect to regulation, phosphorylation both activates and inactivates the enzyme depending on the site of phosphorylation. Its function is as follows. Plays a key role in the control of the eukaryotic cell cycle. Required for entry into S-phase and mitosis. Acts as a component of the kinase complex that phosphorylates the repetitive C-terminus of RNA polymerase II. May function in concert with npp-16 to arrest prophase blastomeres in response to anoxia. The chain is Cyclin-dependent kinase 1 (cdk-1) from Caenorhabditis elegans.